Reading from the N-terminus, the 288-residue chain is Syntaxin-1A (288 aa).

Topologically, residues 1–265 (MKDRTQELRT…KYQSKARRKK (265 aa)) are cytoplasmic. S14, S64, and S95 each carry phosphoserine. Positions 68-109 (DEKTKEELEELMSDIKKTANKVRSKLKSIEQSIEQEEGLNRS) form a coiled coil. The residue at position 188 (S188) is a Phosphoserine; by DAPK1. Residues 192-254 (LSEIETRHSE…ERAVSDTKKA (63 aa)) form the t-SNARE coiled-coil homology domain. Residues K252, K253, and K256 each participate in a glycyl lysine isopeptide (Lys-Gly) (interchain with G-Cter in SUMO) cross-link. A helical; Anchor for type IV membrane protein membrane pass occupies residues 266–286 (IMIIICCVIPGIVIASTVGGI). At 287-288 (FA) the chain is on the extracellular side.

The protein belongs to the syntaxin family. As to quaternary structure, part of the SNARE core complex containing SNAP25, VAMP2 and STX1A; this complex constitutes the basic catalytic machinery of the complex neurotransmitter release apparatus. The SNARE complex interacts with CPLX1. Interacts with STXBP1. The interaction with STXBP1 promotes assembly of the SNARE complex. Interacts (via C-terminus) with KCNB1 (via C-terminus); the interaction increases in a calcium-dependent manner and induces a pore-independent enhancement of exocytosis in neuroendocrine cells, chromaffin cells, pancreatic beta cells and from the soma of dorsal root ganglia (DRG) neurons. Interacts with SYTL4. Interacts with STXBP6. Interacts with PLCL1 (via C2 domain). Interacts with OTOF. Interacts with LGI3. Interacts (via the H3 domain) with SLC6A4 (via the N-terminus); this interaction regulates SLC4A6 channel conductance in thalamocortical neurons. Interacts with SYT6 and SYT8; the interaction is Ca(2+)-dependent. Interacts with VAMP8. Interacts with SNAP23. Interacts with VAPA and SYBU. Interacts with PRRT2. Interacts with SEPT8. Interacts with STXBP5L. Interacts with synaptotagmin-1/SYT1. Interacts with SEPTIN5; in the cerebellar cortex. Interacts with SEPTIN4; in the striatum. In terms of processing, phosphorylated by CK2. Phosphorylation at Ser-188 by DAPK1 significantly decreases its interaction with STXBP1. Post-translationally, sumoylated, sumoylation is required for regulation of synaptic vesicle endocytosis.

The protein localises to the cytoplasmic vesicle. The protein resides in the secretory vesicle. Its subcellular location is the synaptic vesicle membrane. It is found in the cell membrane. It localises to the synapse. The protein localises to the synaptosome. Plays an essential role in hormone and neurotransmitter calcium-dependent exocytosis and endocytosis. Part of the SNARE (Soluble NSF Attachment Receptor) complex composed of SNAP25, STX1A and VAMP2 which mediates the fusion of synaptic vesicles with the presynaptic plasma membrane. STX1A and SNAP25 are localized on the plasma membrane while VAMP2 resides in synaptic vesicles. The pairing of the three SNAREs from the N-terminal SNARE motifs to the C-terminal anchors leads to the formation of the SNARE complex, which brings membranes into close proximity and results in final fusion. Participates in the calcium-dependent regulation of acrosomal exocytosis in sperm. Also plays an important role in the exocytosis of hormones such as insulin or glucagon-like peptide 1 (GLP-1). In Pongo abelii (Sumatran orangutan), this protein is Syntaxin-1A (STX1A).